We begin with the raw amino-acid sequence, 367 residues long: tRNA-specific 2-thiouridylase MnmA (367 aa).

ATP is bound by residues 13–20 (GLSGGVDS) and Met-39. The segment at 99-101 (NPD) is interaction with target base in tRNA. Cys-104 serves as the catalytic Nucleophile. An intrachain disulfide couples Cys-104 to Cys-200. Gly-128 lines the ATP pocket. The interval 150–152 (KDQ) is interaction with tRNA. Catalysis depends on Cys-200, which acts as the Cysteine persulfide intermediate. Residues 307–308 (RY) are interaction with tRNA.

This sequence belongs to the MnmA/TRMU family.

It is found in the cytoplasm. It carries out the reaction S-sulfanyl-L-cysteinyl-[protein] + uridine(34) in tRNA + AH2 + ATP = 2-thiouridine(34) in tRNA + L-cysteinyl-[protein] + A + AMP + diphosphate + H(+). Catalyzes the 2-thiolation of uridine at the wobble position (U34) of tRNA, leading to the formation of s(2)U34. The sequence is that of tRNA-specific 2-thiouridylase MnmA from Neisseria meningitidis serogroup C / serotype 2a (strain ATCC 700532 / DSM 15464 / FAM18).